Consider the following 552-residue polypeptide: Urocanate hydratase (552 aa).

NAD(+) contacts are provided by residues 49-50, Gln127, 173-175, Asp193, 239-240, 260-264, 270-271, and Tyr319; these read GG, GMG, NA, QTSAH, and YI. Cys407 is a catalytic residue. Gly489 contacts NAD(+).

Belongs to the urocanase family. NAD(+) is required as a cofactor.

It localises to the cytoplasm. It catalyses the reaction 4-imidazolone-5-propanoate = trans-urocanate + H2O. The protein operates within amino-acid degradation; L-histidine degradation into L-glutamate; N-formimidoyl-L-glutamate from L-histidine: step 2/3. Catalyzes the conversion of urocanate to 4-imidazolone-5-propionate. The sequence is that of Urocanate hydratase from Bacillus anthracis (strain CDC 684 / NRRL 3495).